A 40-amino-acid polypeptide reads, in one-letter code: Beta-defensin 2 (40 aa).

3 disulfide bridges follow: C7–C36, C14–C29, and C19–C37.

This sequence belongs to the beta-defensin family. As to expression, neutrophilic granules.

It is found in the secreted. Functionally, has bactericidal activity. Active against E.coli ML35 and S.aureus 502A. This Bos taurus (Bovine) protein is Beta-defensin 2 (DEFB2).